A 560-amino-acid chain; its full sequence is Excitatory amino acid transporter 5 (560 aa).

Residues 1-16 (MVPHAILARGRDVCRR) lie on the Cytoplasmic side of the membrane. 3 helical membrane passes run 17–37 (NGLLILSVLSVIVGCLLGFFL), 60–80 (MLKMMILPLVVSSLMSGLASL), and 94–114 (AYYLWTTFMAVIVGIFMVSII). Over 115 to 216 (HPGSAAQKET…EVVYKSEPGT (102 aa)) the chain is Extracellular. N-linked (GlcNAc...) asparagine glycosylation is present at Asn191. The next 7 membrane-spanning stretches (helical) occupy residues 217 to 237 (SDGMNVLGIVFFSATMGIMLG), 260 to 280 (IVAVAVWYFPFGIVFLIAGKI), 300 to 320 (VVCGLVLHGLFILPLLYFFIT), 330 to 350 (GILQALLIALATSSSSATLPI), 372 to 392 (VGATINMDGTALYEAVAAIFI), 414 to 434 (AASIGAAGIPQAGLVTMVIVL), and 457 to 477 (FRTMINVLGDALAAGIMAHIC).

Belongs to the dicarboxylate/amino acid:cation symporter (DAACS) (TC 2.A.23) family. SLC1A7 subfamily. In terms of assembly, interacts with the PDZ domains of DLG4. Expressed primarily in retina. Detectable in liver, heart, muscle and brain.

The protein localises to the photoreceptor inner segment membrane. Its subcellular location is the synaptic cell membrane. The enzyme catalyses K(+)(in) + L-glutamate(out) + 3 Na(+)(out) + H(+)(out) = K(+)(out) + L-glutamate(in) + 3 Na(+)(in) + H(+)(in). It catalyses the reaction K(+)(in) + L-aspartate(out) + 3 Na(+)(out) + H(+)(out) = K(+)(out) + L-aspartate(in) + 3 Na(+)(in) + H(+)(in). It carries out the reaction D-aspartate(out) + K(+)(in) + 3 Na(+)(out) + H(+)(out) = D-aspartate(in) + K(+)(out) + 3 Na(+)(in) + H(+)(in). Its function is as follows. Sodium-dependent, high-affinity amino acid transporter that mediates the uptake of L-glutamate and also L-aspartate and D-aspartate. Functions as a symporter that transports one amino acid molecule together with two or three Na(+) ions and one proton, in parallel with the counter-transport of one K(+) ion. Acts primarily as an inhibitory glutamate-gated chloride channel being a major inhibitory presynaptic receptor at mammalian rod bipolar cell axon terminals. Glutamate binding gates a large Cl(-) conductance that mediates inhibition, affecting visual processing in the retina. This Homo sapiens (Human) protein is Excitatory amino acid transporter 5.